The chain runs to 58 residues: Large ribosomal subunit protein uL30 (58 aa).

It belongs to the universal ribosomal protein uL30 family. As to quaternary structure, part of the 50S ribosomal subunit.

The chain is Large ribosomal subunit protein uL30 from Bacteroides fragilis (strain ATCC 25285 / DSM 2151 / CCUG 4856 / JCM 11019 / LMG 10263 / NCTC 9343 / Onslow / VPI 2553 / EN-2).